A 289-amino-acid chain; its full sequence is MLIIDNPQQLREKIKQLKQQGSEIAFVPTMGNLHEGHLTLVQAGQKKAAVVIVSIFINPMQFNNAQDLLNYPKTMAQDCEKLAAAGVNIIFTPAASSIYPNGLNAQTYVEVPLLSNCLEGELRPGHFRGMSTIVNKLFNLVQPDYACFGEKDFQQLAIVKQMVSDLGMPIEIIPVATMREKNGLAMSSRNGKLSSLEKQKAPLLAKVMNQLAVDVQAQKTELSILIDDASIILNNAGFNTDAIHIVDAQTLQAVNCHSKEAVILMAAFLGETRLIDNKVVILNHSATKI.

Position 30 to 37 (30 to 37 (MGNLHEGH)) interacts with ATP. His-37 serves as the catalytic Proton donor. A (R)-pantoate-binding site is contributed by Gln-61. Beta-alanine is bound at residue Gln-61. 149–152 (GEKD) serves as a coordination point for ATP. Residue Gln-155 participates in (R)-pantoate binding. 186–189 (MSSR) contributes to the ATP binding site.

This sequence belongs to the pantothenate synthetase family. As to quaternary structure, homodimer.

The protein resides in the cytoplasm. The catalysed reaction is (R)-pantoate + beta-alanine + ATP = (R)-pantothenate + AMP + diphosphate + H(+). It functions in the pathway cofactor biosynthesis; (R)-pantothenate biosynthesis; (R)-pantothenate from (R)-pantoate and beta-alanine: step 1/1. Its function is as follows. Catalyzes the condensation of pantoate with beta-alanine in an ATP-dependent reaction via a pantoyl-adenylate intermediate. This is Pantothenate synthetase from Psychromonas ingrahamii (strain DSM 17664 / CCUG 51855 / 37).